The following is a 100-amino-acid chain: Pregnancy-associated protein bPAP (100 aa).

Residues 1 to 40 (DSELAGPRGARGPHGLSGPHGLSGLXGPXGYTGPIGMXGL) are disordered. A compositionally biased stretch (low complexity) spans 13-29 (PHGLSGPHGLSGLXGPX).

Detected at high levels in the urine of pregnant females (at protein level) and at far lower levels in the urine of nonpregnant females.

In Bos taurus (Bovine), this protein is Pregnancy-associated protein bPAP.